Consider the following 696-residue polypeptide: Spermatogenesis-associated protein 21 (696 aa).

Disordered stretches follow at residues 1-301 (MDNR…AAGT) and 329-386 (LKAR…SVPT). Residues 67 to 86 (KGPRYRDTFKEGPSELRTQE) show a composition bias toward basic and acidic residues. Residues 96-116 (KQSSWVPQEGSQELQAGQDQS) are compositionally biased toward polar residues. Positions 195-209 (GDKRPKEADVPHIRP) are enriched in basic and acidic residues. Polar residues predominate over residues 223–235 (DSSQEAMPPTSTV). The segment covering 275–287 (EVRDIGERREPDR) has biased composition (basic and acidic residues). Composition is skewed to low complexity over residues 288–297 (VQQQPQKPVV) and 339–366 (SPRTLTPVPTSSPSLPQTPASAPASGPS). Residues 424–451 (EPEEQSLQKLYQNREKSEEQLTLKQEEA) are a coiled coil. Residues 481–516 (VTPAQVEDALMSADVNGDGHVDFKDFLAVMTDTRRF) enclose the EF-hand domain. 5 residues coordinate Ca(2+): aspartate 494, asparagine 496, aspartate 498, histidine 500, and aspartate 505. Residues 646 to 696 (KPTNHYVQDQCTTPGLAPDIRSPFFQSRSQGNREHNSDSRKWPSSVPSRTH) are disordered. A compositionally biased stretch (basic and acidic residues) spans 676–686 (GNREHNSDSRK).

Functionally, involved in the differentiation of haploid spermatids. This chain is Spermatogenesis-associated protein 21 (SPATA21), found in Macaca fascicularis (Crab-eating macaque).